We begin with the raw amino-acid sequence, 119 residues long: MTTRQICTLPRQCKLRKADEFRAVLRNRIVFESLSLRLYVKPIDVDYARIGLIVAKRVERKAVRRNRIKRLIREAFRRHRQMLMGLDCVMQLRHPVELLDSTRIYQEAVMLFNKAARQL.

Belongs to the RnpA family. In terms of assembly, consists of a catalytic RNA component (M1 or rnpB) and a protein subunit.

The enzyme catalyses Endonucleolytic cleavage of RNA, removing 5'-extranucleotides from tRNA precursor.. In terms of biological role, RNaseP catalyzes the removal of the 5'-leader sequence from pre-tRNA to produce the mature 5'-terminus. It can also cleave other RNA substrates such as 4.5S RNA. The protein component plays an auxiliary but essential role in vivo by binding to the 5'-leader sequence and broadening the substrate specificity of the ribozyme. The chain is Ribonuclease P protein component from Nitrosomonas europaea (strain ATCC 19718 / CIP 103999 / KCTC 2705 / NBRC 14298).